A 417-amino-acid polypeptide reads, in one-letter code: CinA-like protein (417 aa).

The protein belongs to the CinA family.

In Synechococcus sp. (strain RCC307), this protein is CinA-like protein.